Reading from the N-terminus, the 454-residue chain is Bifunctional protein GlmU (454 aa).

The interval 1–228 (MTLPLHVVIL…PQDVEGANDP (228 aa)) is pyrophosphorylase. UDP-N-acetyl-alpha-D-glucosamine-binding positions include 10–13 (LAAG), lysine 24, glutamine 76, 81–82 (GT), 103–105 (YGD), glycine 138, glutamate 153, asparagine 168, and asparagine 226. Position 105 (aspartate 105) interacts with Mg(2+). Residue asparagine 226 participates in Mg(2+) binding. A linker region spans residues 229 to 249 (WQLAQLERAWQLRAARALSLQ). Residues 250–454 (GVRMADPARV…IEGWERPTKK (205 aa)) are N-acetyltransferase. 2 residues coordinate UDP-N-acetyl-alpha-D-glucosamine: arginine 332 and lysine 350. The Proton acceptor role is filled by histidine 362. UDP-N-acetyl-alpha-D-glucosamine contacts are provided by tyrosine 365 and asparagine 376. Acetyl-CoA contacts are provided by residues alanine 379, 385–386 (NY), serine 404, alanine 422, and arginine 439.

The protein in the N-terminal section; belongs to the N-acetylglucosamine-1-phosphate uridyltransferase family. It in the C-terminal section; belongs to the transferase hexapeptide repeat family. As to quaternary structure, homotrimer. Mg(2+) is required as a cofactor.

The protein resides in the cytoplasm. It catalyses the reaction alpha-D-glucosamine 1-phosphate + acetyl-CoA = N-acetyl-alpha-D-glucosamine 1-phosphate + CoA + H(+). The enzyme catalyses N-acetyl-alpha-D-glucosamine 1-phosphate + UTP + H(+) = UDP-N-acetyl-alpha-D-glucosamine + diphosphate. It participates in nucleotide-sugar biosynthesis; UDP-N-acetyl-alpha-D-glucosamine biosynthesis; N-acetyl-alpha-D-glucosamine 1-phosphate from alpha-D-glucosamine 6-phosphate (route II): step 2/2. It functions in the pathway nucleotide-sugar biosynthesis; UDP-N-acetyl-alpha-D-glucosamine biosynthesis; UDP-N-acetyl-alpha-D-glucosamine from N-acetyl-alpha-D-glucosamine 1-phosphate: step 1/1. The protein operates within bacterial outer membrane biogenesis; LPS lipid A biosynthesis. Functionally, catalyzes the last two sequential reactions in the de novo biosynthetic pathway for UDP-N-acetylglucosamine (UDP-GlcNAc). The C-terminal domain catalyzes the transfer of acetyl group from acetyl coenzyme A to glucosamine-1-phosphate (GlcN-1-P) to produce N-acetylglucosamine-1-phosphate (GlcNAc-1-P), which is converted into UDP-GlcNAc by the transfer of uridine 5-monophosphate (from uridine 5-triphosphate), a reaction catalyzed by the N-terminal domain. In Xanthomonas oryzae pv. oryzae (strain MAFF 311018), this protein is Bifunctional protein GlmU.